We begin with the raw amino-acid sequence, 332 residues long: DNA-directed RNA polymerase subunit alpha (332 aa).

The alpha N-terminal domain (alpha-NTD) stretch occupies residues 1–227; sequence MKKFAETPFL…VMYSQMSVFN (227 aa). The segment at 248 to 332 is alpha C-terminal domain (alpha-CTD); that stretch reads KELVIRIDDL…LRRKLEQLKA (85 aa).

This sequence belongs to the RNA polymerase alpha chain family. Homodimer. The RNAP catalytic core consists of 2 alpha, 1 beta, 1 beta' and 1 omega subunit. When a sigma factor is associated with the core the holoenzyme is formed, which can initiate transcription.

It catalyses the reaction RNA(n) + a ribonucleoside 5'-triphosphate = RNA(n+1) + diphosphate. Functionally, DNA-dependent RNA polymerase catalyzes the transcription of DNA into RNA using the four ribonucleoside triphosphates as substrates. The chain is DNA-directed RNA polymerase subunit alpha from Aliarcobacter butzleri (strain RM4018) (Arcobacter butzleri).